The following is a 203-amino-acid chain: MQILLATVAAYLIGSVSFAVVVSAAMGLADPRSYGSKNPGATNVLRSGNKKAAILTLVGDAFKGWLAVWLVKRFGIGGEIGVALAAIAVFLGHLYPVFFRFQGGKGVATAAGVLLAVHPVLGLATALTWLIVAFFFRYSSLAALVAAVFAPIFDVFLFGTHDNPVAWAVLAMSVLLIWRHRSNISKLLAGEESRIGQKKKTGA.

6 helical membrane passes run 3–23 (ILLA…VVVS), 51–71 (KAAI…VWLV), 74–94 (FGIG…LGHL), 116–136 (AVHP…AFFF), 140–160 (SLAA…LFGT), and 164–178 (PVAW…LLIW).

Belongs to the PlsY family. In terms of assembly, probably interacts with PlsX.

The protein resides in the cell inner membrane. It catalyses the reaction an acyl phosphate + sn-glycerol 3-phosphate = a 1-acyl-sn-glycero-3-phosphate + phosphate. It participates in lipid metabolism; phospholipid metabolism. Catalyzes the transfer of an acyl group from acyl-phosphate (acyl-PO(4)) to glycerol-3-phosphate (G3P) to form lysophosphatidic acid (LPA). This enzyme utilizes acyl-phosphate as fatty acyl donor, but not acyl-CoA or acyl-ACP. In Burkholderia pseudomallei (strain 1710b), this protein is Glycerol-3-phosphate acyltransferase.